We begin with the raw amino-acid sequence, 514 residues long: Cytochrome P450 monooxygenase ptmQ (514 aa).

Residues 3–23 (YVAQSPWIATLIVTATTYCTL) traverse the membrane as a helical segment. A glycan (N-linked (GlcNAc...) asparagine) is linked at N148. A heme-binding site is contributed by C452. N486 carries an N-linked (GlcNAc...) asparagine glycan.

The protein belongs to the cytochrome P450 family. Heme is required as a cofactor.

The protein localises to the membrane. It participates in secondary metabolite biosynthesis. Functionally, cytochrome P450 monooxygenase; part of the gene cluster that mediates the biosynthesis of the indole diterpenes penitrems. The geranylgeranyl diphosphate (GGPP) synthase ptmG catalyzes the first step in penitrem biosynthesis via conversion of farnesyl pyrophosphate and isopentyl pyrophosphate into geranylgeranyl pyrophosphate (GGPP). Condensation of indole-3-glycerol phosphate with GGPP by the prenyl transferase ptmC then forms 3-geranylgeranylindole (3-GGI). Epoxidation by the FAD-dependent monooxygenase ptmM leads to a epoxidized-GGI that is substrate of the terpene cyclase ptmB for cyclization to yield paspaline. Paspaline is subsequently converted to 13-desoxypaxilline by the cytochrome P450 monooxygenase ptmP, the latter being then converted to paxilline by the cytochrome P450 monooxygenase ptmQ. Paxilline is converted to beta-paxitriol via C-10 ketoreduction by the short-chain dehydrogenase ptmH which can be monoprenylated at the C-20 by the indole diterpene prenyltransferase ptmD. A two-step elimination (acetylation and elimination) process performed by the O-acetyltransferase ptmV and ptmI leads to the production of the prenylated form of penijanthine. The FAD-linked oxidoreductase ptmO then converts the prenylated form of penijanthine into PC-M5 which is in turn transformed into PC-M4 by the aromatic dimethylallyltransferase ptmE. Five sequential oxidative transformations performed by the cytochrome P450 monooxygenases ptmK, ptmU, ptmL, ptmN and ptmJ yield the various penitrem compounds. PtmK, ptmU and ptmM are involved in the formation of the key bicyclic ring of penitrem C via the formation of the intermediates secopenitrem D and penitrem D. PtmL catalyzes the epoxidation of penitrem D and C to yield penitrem B and F, respectively. PtmJ catalyzes the last benzylic hydroxylation to convert penitrem B to prenitrem E and penitrem F to penitrem A. This Penicillium ochrochloron protein is Cytochrome P450 monooxygenase ptmQ.